Here is a 548-residue protein sequence, read N- to C-terminus: MAKFMTPVIQDNPSGWGPCAVPEQFRDMPYQPFSKGDRLGKVADWTGATYQDKRYTNKYSSQFGGGSQYAYFHEEDETSFQLVDTARTQKTAYQRNRMRFAQRNLRRDKDRRNMVQFNLQTLPKSAKQKERERIRLQKKFQKQFGVRQKWDQKSQKPRDSSVEVRSDWEVKEEMDFPQLMKMRYLEVSEPQDIECCGALEYYDKAFDRITTRSEKPLRSIKRIFHTVTTTDDPVIRKLAKTQGNVFATDAILATLMSCTRSVYSWDIVVQRVGSKLFFDKRDNSDFDLLTVSETANEPPQDEGNSFNSPRNLAMEATYINHNFSQQCLRMGRERYNFPNPNPFVEDDMDKNEIASVAYRYRRWKLGDDIDLIVRCEHDGVMTGANGEVSFINIKTLNEWDSRHCNGVDWRQKLDSQRGAVIATELKNNSYKLARWTCCALLAGSEYLKLGYVSRYHVKDSSRHVILGTQQFKPNEFASQINLSVENAWGILRCVIDICMKLEEGKYLILKDPNKQVIRVYSLPDGTFSSEEDEEDEEEEEEEEEEEET.

An N6-acetyllysine modification is found at lysine 53. A Phosphoserine modification is found at serine 161. Residues 285–299 (DFDLLTVSETANEPP) are RNA gate. The segment at 523 to 548 (PDGTFSSEEDEEDEEEEEEEEEEEET) is disordered. 2 positions are modified to phosphoserine: serine 528 and serine 529. The span at 529–548 (SEEDEEDEEEEEEEEEEEET) shows a compositional bias: acidic residues.

It belongs to the eIF-3 subunit D family. As to quaternary structure, component of the eukaryotic translation initiation factor 3 (eIF-3) complex, which is composed of 13 subunits: EIF3A, EIF3B, EIF3C, EIF3D, EIF3E, EIF3F, EIF3G, EIF3H, EIF3I, EIF3J, EIF3K, EIF3L and EIF3M. The eIF-3 complex appears to include 3 stable modules: module A is composed of EIF3A, EIF3B, EIF3G and EIF3I; module B is composed of EIF3F, EIF3H, and EIF3M; and module C is composed of EIF3C, EIF3D, EIF3E, EIF3K and EIF3L. EIF3C of module C binds EIF3B of module A and EIF3H of module B, thereby linking the three modules. EIF3J is a labile subunit that binds to the eIF-3 complex via EIF3B. The eIF-3 complex may interact with RPS6KB1 under conditions of nutrient depletion. Mitogenic stimulation may lead to binding and activation of a complex composed of MTOR and RPTOR, leading to phosphorylation and release of RPS6KB1 and binding of EIF4B to eIF-3.

It is found in the cytoplasm. Functionally, mRNA cap-binding component of the eukaryotic translation initiation factor 3 (eIF-3) complex, a complex required for several steps in the initiation of protein synthesis of a specialized repertoire of mRNAs. The eIF-3 complex associates with the 40S ribosome and facilitates the recruitment of eIF-1, eIF-1A, eIF-2:GTP:methionyl-tRNAi and eIF-5 to form the 43S pre-initiation complex (43S PIC). The eIF-3 complex stimulates mRNA recruitment to the 43S PIC and scanning of the mRNA for AUG recognition. The eIF-3 complex is also required for disassembly and recycling of post-termination ribosomal complexes and subsequently prevents premature joining of the 40S and 60S ribosomal subunits prior to initiation. The eIF-3 complex specifically targets and initiates translation of a subset of mRNAs involved in cell proliferation, including cell cycling, differentiation and apoptosis, and uses different modes of RNA stem-loop binding to exert either translational activation or repression. In the eIF-3 complex, EIF3D specifically recognizes and binds the 7-methylguanosine cap of a subset of mRNAs. The sequence is that of Eukaryotic translation initiation factor 3 subunit D (Eif3d) from Mus musculus (Mouse).